Reading from the N-terminus, the 85-residue chain is Acylphosphatase (85 aa).

Residues 3–85 enclose the Acylphosphatase-like domain; it reads AARFVVSGVV…PARFRRLKTL (83 aa). Catalysis depends on residues Arg18 and Asn36. Positions 66-85 are disordered; the sequence is PPRSRRSRARPARFRRLKTL.

It belongs to the acylphosphatase family.

It catalyses the reaction an acyl phosphate + H2O = a carboxylate + phosphate + H(+). The chain is Acylphosphatase (acyP) from Xanthomonas axonopodis pv. citri (strain 306).